The primary structure comprises 508 residues: Light-independent protochlorophyllide reductase subunit B (508 aa).

Residue Asp36 participates in [4Fe-4S] cluster binding. Catalysis depends on Asp294, which acts as the Proton donor. 429 to 430 (GM) is a substrate binding site.

Belongs to the ChlB/BchB/BchZ family. In terms of assembly, protochlorophyllide reductase is composed of three subunits; ChlL, ChlN and ChlB. Forms a heterotetramer of two ChlB and two ChlN subunits. Requires [4Fe-4S] cluster as cofactor.

It carries out the reaction chlorophyllide a + oxidized 2[4Fe-4S]-[ferredoxin] + 2 ADP + 2 phosphate = protochlorophyllide a + reduced 2[4Fe-4S]-[ferredoxin] + 2 ATP + 2 H2O. Its pathway is porphyrin-containing compound metabolism; chlorophyll biosynthesis (light-independent). Its function is as follows. Component of the dark-operative protochlorophyllide reductase (DPOR) that uses Mg-ATP and reduced ferredoxin to reduce ring D of protochlorophyllide (Pchlide) to form chlorophyllide a (Chlide). This reaction is light-independent. The NB-protein (ChlN-ChlB) is the catalytic component of the complex. The sequence is that of Light-independent protochlorophyllide reductase subunit B from Gloeothece citriformis (strain PCC 7424) (Cyanothece sp. (strain PCC 7424)).